Here is a 441-residue protein sequence, read N- to C-terminus: Nucleoprotein (441 aa).

The disordered stretch occupies residues 1–56 (MSYTPGHHAGSRSSSGNRSGILKKTSWVDQSERSHQTYNRGRKPQPKFTVSTQPQG). The span at 11–20 (SRSSSGNRSG) shows a compositional bias: low complexity. The tract at residues 53–193 (QPQGNPIPHY…GYYVEGSGRS (141 aa)) is RNA-binding. The CoV N NTD domain maps to 60–189 (PHYSWFSGIT…ILPQGYYVEG (130 aa)). Residues arginine 105 and arginine 121 each contribute to the RNA site. Serine 158 bears the Phosphoserine; by host mark. Residue arginine 163 coordinates RNA. Residue threonine 173 is modified to Phosphothreonine; by host. The segment at 186-226 (YVEGSGRSASNSRPGSRSQSRGPNNRSLSRSNSNFRHSDSI) is disordered. Over residues 189–220 (GSGRSASNSRPGSRSQSRGPNNRSLSRSNSNF) the composition is skewed to low complexity. Phosphoserine; by host is present on serine 190. The CoV N CTD domain maps to 257-379 (AKEIRHKILM…ENLDAYVNSN (123 aa)). Residues 264-382 (ILMKPRQKRT…DAYVNSNQNT (119 aa)) are dimerization. Positions 380–389 (QNTVSGSLSP) are enriched in polar residues. The tract at residues 380-408 (QNTVSGSLSPKPQRKRGVKQSPESFDSLN) is disordered. Phosphoserine; by host is present on residues serine 388 and serine 417. Threonine 421 carries the post-translational modification Phosphothreonine; by host.

It belongs to the betacoronavirus nucleocapsid protein family. Homooligomer. Both monomeric and oligomeric forms interact with RNA. Interacts with protein M. Interacts with NSP3; this interaction serves to tether the genome to the newly translated replicase-transcriptase complex at a very early stage of infection. Post-translationally, ADP-ribosylated. The ADP-ribosylation is retained in the virion during infection. In terms of processing, phosphorylated on serine and threonine residues.

Its subcellular location is the virion. The protein localises to the host endoplasmic reticulum-Golgi intermediate compartment. It is found in the host Golgi apparatus. Packages the positive strand viral genome RNA into a helical ribonucleocapsid (RNP) and plays a fundamental role during virion assembly through its interactions with the viral genome and membrane protein M. Plays an important role in enhancing the efficiency of subgenomic viral RNA transcription as well as viral replication. This chain is Nucleoprotein, found in Homo sapiens (Human).